A 148-amino-acid chain; its full sequence is uncharacterized protein (148 aa).

A run of 3 helical transmembrane segments spans residues 20-42 (YYSK…IANY), 52-74 (YFLM…VRCY), and 118-135 (IIRY…CTYI).

The protein resides in the cell membrane. This is an uncharacterized protein from Rickettsia prowazekii (strain Madrid E).